Reading from the N-terminus, the 638-residue chain is ATP-dependent zinc metalloprotease FtsH (638 aa).

Residues 1–15 (MDNNHKGPNDPNSKK) lie on the Cytoplasmic side of the membrane. A helical transmembrane segment spans residues 16-36 (PLLQNPLLLIAIFGIIIFVAM). The Periplasmic portion of the chain corresponds to 37–122 (RVMNSDEGFG…INYSGFSESN (86 aa)). Residues 123-143 (FFADILGWLLPVLVILGLWMF) form a helical membrane-spanning segment. At 144–638 (MASRMQKNMG…RLVPLEEHAS (495 aa)) the chain is on the cytoplasmic side. Position 216-223 (216-223 (GPPGTGKT)) interacts with ATP. Histidine 440 contacts Zn(2+). The active site involves glutamate 441. Residues histidine 444 and aspartate 517 each contribute to the Zn(2+) site.

In the central section; belongs to the AAA ATPase family. This sequence in the C-terminal section; belongs to the peptidase M41 family. Homohexamer. The cofactor is Zn(2+).

It is found in the cell inner membrane. In terms of biological role, acts as a processive, ATP-dependent zinc metallopeptidase for both cytoplasmic and membrane proteins. Plays a role in the quality control of integral membrane proteins. The sequence is that of ATP-dependent zinc metalloprotease FtsH from Helicobacter felis (strain ATCC 49179 / CCUG 28539 / NCTC 12436 / CS1).